We begin with the raw amino-acid sequence, 239 residues long: DNA repair protein RecO (239 aa).

This sequence belongs to the RecO family.

In terms of biological role, involved in DNA repair and RecF pathway recombination. This Glaesserella parasuis serovar 5 (strain SH0165) (Haemophilus parasuis) protein is DNA repair protein RecO.